The primary structure comprises 125 residues: Fluoride-specific ion channel FluC (125 aa).

4 helical membrane passes run 1–21 (MIQA…RYYV), 32–52 (AFPW…GVFA), 68–88 (LLIT…LDAI), and 101–121 (IYIA…LAVM). Residues G75 and T78 each contribute to the Na(+) site.

It belongs to the fluoride channel Fluc/FEX (TC 1.A.43) family.

It is found in the cell inner membrane. It catalyses the reaction fluoride(in) = fluoride(out). With respect to regulation, na(+) is not transported, but it plays an essential structural role and its presence is essential for fluoride channel function. Fluoride-specific ion channel. Important for reducing fluoride concentration in the cell, thus reducing its toxicity. This is Fluoride-specific ion channel FluC from Rhizobium johnstonii (strain DSM 114642 / LMG 32736 / 3841) (Rhizobium leguminosarum bv. viciae).